Reading from the N-terminus, the 557-residue chain is Urocanate hydratase (557 aa).

The disordered stretch occupies residues 1–20 (MSNPRHNEREVRSPRGDELN). NAD(+) is bound by residues 52–53 (GG), Q130, 176–178 (GMG), E196, R201, 242–243 (NA), 263–267 (QTSAH), 273–274 (YL), and Y322. Residue C410 is part of the active site. Position 492 (G492) interacts with NAD(+).

It belongs to the urocanase family. The cofactor is NAD(+).

Its subcellular location is the cytoplasm. It catalyses the reaction 4-imidazolone-5-propanoate = trans-urocanate + H2O. The protein operates within amino-acid degradation; L-histidine degradation into L-glutamate; N-formimidoyl-L-glutamate from L-histidine: step 2/3. Catalyzes the conversion of urocanate to 4-imidazolone-5-propionate. In Brucella melitensis biotype 2 (strain ATCC 23457), this protein is Urocanate hydratase.